A 321-amino-acid chain; its full sequence is Necdin (321 aa).

The interval 1-96 (MSEQSKDLSD…QPGPAPPAPA (96 aa)) is disordered. Over residues 20–35 (SEVHSSPGVSEGVPPS) the composition is skewed to low complexity. An MAGE domain is found at 98-297 (LVQKAHELMW…QAWPSRYREA (200 aa)).

Binds to the transactivation domains of E2F1 and p53. Binds also SV40 large T antigen and adenovirus E1A. Interacts with nucleobindin 1 and 2. As to expression, almost ubiquitous. Detected in fetal brain, lung, liver and kidney; in adult heart, brain, placenta, lung, liver, skeletal muscle, kidney, pancreas, spleen, thymus, prostate, testis, ovary, small intestine and colon. Not detected in peripheral blood leukocytes. In brain, restricted to post-mitotic neurons.

It is found in the perikaryon. The protein localises to the nucleus. Its function is as follows. Growth suppressor that facilitates the entry of the cell into cell cycle arrest. Functionally similar to the retinoblastoma protein it binds to and represses the activity of cell-cycle-promoting proteins such as SV40 large T antigen, adenovirus E1A, and the transcription factor E2F. Necdin also interacts with p53 and works in an additive manner to inhibit cell growth. Also functions as a transcription factor and directly binds to specific guanosine-rich DNA sequences. The chain is Necdin (NDN) from Homo sapiens (Human).